The sequence spans 289 residues: MLSMLWFLLSLLSLLLLPCLRPCFPAKGSLKNKKKIDKGTYVVGEEETPKELQRELMPRHVAVIMDGNRRWAKQTGLLTSQGYEAGAKRLLEFADLCFKLGINTVSAFAFSTENWGRHKIEVKCLMYLFQRYLKSKIQFFQSKEIRVSVIGNLAKIPESLLRTVHELEEATKSYKKKHLILAIDYSGRFDILGACKNIVKKSEQGLIREEDVDETLFERELQTRCTEFPSPDLLIRTSGEQRISNFFLWQLAYTEFFFSPVLWPDFDKQKFIEALVSYQRRDRRFGSRL.

A helical membrane pass occupies residues 2–22 (LSMLWFLLSLLSLLLLPCLRP).

Belongs to the UPP synthase family. The cofactor is Mg(2+).

The protein localises to the endoplasmic reticulum membrane. It functions in the pathway protein modification; protein glycosylation. Its function is as follows. Catalyzes cis-prenyl chain elongation to produce the polyprenyl backbone of dolichol, a glycosyl carrier-lipid required for the biosynthesis of several classes of glycoprotein. The chain is Dehydrodolichyl diphosphate synthase 4 from Arabidopsis thaliana (Mouse-ear cress).